A 723-amino-acid polypeptide reads, in one-letter code: Epidermal growth factor receptor kinase substrate 8-like protein 1 (723 aa).

The 130-residue stretch at 35–164 folds into the PTB domain; the sequence is QYPVNHLVTF…LHNYRSGRGE (130 aa). Residues 162–183 are compositionally biased toward basic and acidic residues; it reads RGERRAAALRATQEELQRDRSP. Disordered regions lie at residues 162–247, 442–477, 537–589, and 609–636; these read RGER…PRGP, KQLQHERRRRQQSAPQVAVNGHRDLEPESEPQLESE, GPRL…GLDP, and LAQGRSGPSRAVPGPRAPEPQLSPGSDA. Ser182 bears the Phosphoserine mark. Phosphothreonine is present on Thr187. In terms of domain architecture, SH3 spans 478–537; it reads TAGKWVLCNYDFQARNSSELSVKQRDVLEVLDDSRKWWKVRDPAGQEGYVPYNILTPYPG. Over residues 543–552 the composition is skewed to polar residues; it reads SQSPARSLNS. Pro residues predominate over residues 553–568; the sequence is TPPPPPAPAPAPPPAL. Residues 571 to 580 are compositionally biased toward basic and acidic residues; the sequence is PRWDRPRWDS. Positions 689–719 form a coiled coil; it reads VQRSLLEDKEKVSELEAVMEKQKKKVEGEVE.

It belongs to the EPS8 family. In terms of assembly, interacts with ABI1. Part of a complex that contains SOS1, ABI1 and EPS8L2. Associates with F-actin. As to expression, detected in placenta.

It is found in the cytoplasm. Functionally, stimulates guanine exchange activity of SOS1. May play a role in membrane ruffling and remodeling of the actin cytoskeleton. The chain is Epidermal growth factor receptor kinase substrate 8-like protein 1 (EPS8L1) from Homo sapiens (Human).